Here is a 281-residue protein sequence, read N- to C-terminus: Formamidopyrimidine-DNA glycosylase (281 aa).

The active-site Schiff-base intermediate with DNA is the Pro2. Glu3 acts as the Proton donor in catalysis. The active-site Proton donor; for beta-elimination activity is the Lys58. DNA contacts are provided by His94, Arg113, and Arg156. The FPG-type; degenerate zinc-finger motif lies at 241–281 (AVYDRVGQPCPGCDCDVARTGGIERMVQSGRSTFFCGRRQR). Residue Arg271 is the Proton donor; for delta-elimination activity of the active site.

It belongs to the FPG family. As to quaternary structure, monomer. Zn(2+) serves as cofactor.

The catalysed reaction is Hydrolysis of DNA containing ring-opened 7-methylguanine residues, releasing 2,6-diamino-4-hydroxy-5-(N-methyl)formamidopyrimidine.. It carries out the reaction 2'-deoxyribonucleotide-(2'-deoxyribose 5'-phosphate)-2'-deoxyribonucleotide-DNA = a 3'-end 2'-deoxyribonucleotide-(2,3-dehydro-2,3-deoxyribose 5'-phosphate)-DNA + a 5'-end 5'-phospho-2'-deoxyribonucleoside-DNA + H(+). Its function is as follows. Involved in base excision repair of DNA damaged by oxidation or by mutagenic agents. Acts as a DNA glycosylase that recognizes and removes damaged bases. Has a preference for oxidized purines, such as 7,8-dihydro-8-oxoguanine (8-oxoG). Has AP (apurinic/apyrimidinic) lyase activity and introduces nicks in the DNA strand. Cleaves the DNA backbone by beta-delta elimination to generate a single-strand break at the site of the removed base with both 3'- and 5'-phosphates. The protein is Formamidopyrimidine-DNA glycosylase of Rhodospirillum rubrum (strain ATCC 11170 / ATH 1.1.1 / DSM 467 / LMG 4362 / NCIMB 8255 / S1).